The following is a 132-amino-acid chain: Protein NrdI (132 aa).

This sequence belongs to the NrdI family.

Its function is as follows. Probably involved in ribonucleotide reductase function. The polypeptide is Protein NrdI (Staphylococcus epidermidis (strain ATCC 35984 / DSM 28319 / BCRC 17069 / CCUG 31568 / BM 3577 / RP62A)).